A 202-amino-acid chain; its full sequence is Guanylate kinase (202 aa).

Residues 3–181 (GNLFIITAPS…ALEDLRAIIR (179 aa)) enclose the Guanylate kinase-like domain. 10–17 (APSGAGKT) provides a ligand contact to ATP.

It belongs to the guanylate kinase family.

The protein localises to the cytoplasm. The catalysed reaction is GMP + ATP = GDP + ADP. Its function is as follows. Essential for recycling GMP and indirectly, cGMP. The polypeptide is Guanylate kinase (Methylobacillus flagellatus (strain ATCC 51484 / DSM 6875 / VKM B-1610 / KT)).